The sequence spans 882 residues: DNA mismatch repair protein MutS (882 aa).

Residue glycine 656 to serine 663 coordinates ATP.

It belongs to the DNA mismatch repair MutS family.

Its function is as follows. This protein is involved in the repair of mismatches in DNA. It is possible that it carries out the mismatch recognition step. This protein has a weak ATPase activity. The chain is DNA mismatch repair protein MutS from Synechococcus sp. (strain ATCC 27144 / PCC 6301 / SAUG 1402/1) (Anacystis nidulans).